Here is a 319-residue protein sequence, read N- to C-terminus: F-box only protein 8 (319 aa).

Residues 68-111 (FINLEMLPPELSFTILSYLNATDLCLASCVWQDLANDELLWQGL) enclose the F-box domain. An SEC7 domain is found at 146–276 (FNANPDEGVN…LILLSIDLTS (131 aa)).

Its function is as follows. May promote guanine-nucleotide exchange on an ARF. Promotes the activation of ARF through replacement of GDP with GTP (Potential). The sequence is that of F-box only protein 8 (FBXO8) from Homo sapiens (Human).